The following is a 328-amino-acid chain: Ketol-acid reductoisomerase (NADP(+)) (328 aa).

The 181-residue stretch at 2–182 (AKIYRDGDAS…GATRAGVIET (181 aa)) folds into the KARI N-terminal Rossmann domain. Residues 25 to 28 (YGIQ), R48, S53, and 83 to 86 (DMEQ) contribute to the NADP(+) site. H108 is a catalytic residue. G134 contacts NADP(+). The region spanning 183 to 328 (TFAEETETDL…AEMRKLLFGP (146 aa)) is the KARI C-terminal knotted domain. Mg(2+) contacts are provided by D191, E195, E227, and E231. A substrate-binding site is contributed by S252.

It belongs to the ketol-acid reductoisomerase family. Requires Mg(2+) as cofactor.

The catalysed reaction is (2R)-2,3-dihydroxy-3-methylbutanoate + NADP(+) = (2S)-2-acetolactate + NADPH + H(+). The enzyme catalyses (2R,3R)-2,3-dihydroxy-3-methylpentanoate + NADP(+) = (S)-2-ethyl-2-hydroxy-3-oxobutanoate + NADPH + H(+). It participates in amino-acid biosynthesis; L-isoleucine biosynthesis; L-isoleucine from 2-oxobutanoate: step 2/4. Its pathway is amino-acid biosynthesis; L-valine biosynthesis; L-valine from pyruvate: step 2/4. Functionally, involved in the biosynthesis of branched-chain amino acids (BCAA). Catalyzes an alkyl-migration followed by a ketol-acid reduction of (S)-2-acetolactate (S2AL) to yield (R)-2,3-dihydroxy-isovalerate. In the isomerase reaction, S2AL is rearranged via a Mg-dependent methyl migration to produce 3-hydroxy-3-methyl-2-ketobutyrate (HMKB). In the reductase reaction, this 2-ketoacid undergoes a metal-dependent reduction by NADPH to yield (R)-2,3-dihydroxy-isovalerate. This is Ketol-acid reductoisomerase (NADP(+)) from Pyrobaculum calidifontis (strain DSM 21063 / JCM 11548 / VA1).